We begin with the raw amino-acid sequence, 491 residues long: Chromosomal replication initiator protein DnaA (491 aa).

The segment at 1 to 86 (MTDELNSQFT…VEALSRRLGE (86 aa)) is domain I, interacts with DnaA modulators. The tract at residues 86 to 150 (ENVELGVRIA…GADKAETPDT (65 aa)) is domain II. Residues 151-367 (SLNARYTFES…GALIRVTAFA (217 aa)) are domain III, AAA+ region. Gly-195, Gly-197, Lys-198, and Thr-199 together coordinate ATP. Residues 368-491 (SLNKSPIELS…TARIRQRSRH (124 aa)) form a domain IV, binds dsDNA region.

Belongs to the DnaA family. In terms of assembly, oligomerizes as a right-handed, spiral filament on DNA at oriC.

The protein localises to the cytoplasm. Its function is as follows. Plays an essential role in the initiation and regulation of chromosomal replication. ATP-DnaA binds to the origin of replication (oriC) to initiate formation of the DNA replication initiation complex once per cell cycle. Binds the DnaA box (a 9 base pair repeat at the origin) and separates the double-stranded (ds)DNA. Forms a right-handed helical filament on oriC DNA; dsDNA binds to the exterior of the filament while single-stranded (ss)DNA is stabiized in the filament's interior. The ATP-DnaA-oriC complex binds and stabilizes one strand of the AT-rich DNA unwinding element (DUE), permitting loading of DNA polymerase. After initiation quickly degrades to an ADP-DnaA complex that is not apt for DNA replication. Binds acidic phospholipids. The polypeptide is Chromosomal replication initiator protein DnaA (Mycobacteroides abscessus (strain ATCC 19977 / DSM 44196 / CCUG 20993 / CIP 104536 / JCM 13569 / NCTC 13031 / TMC 1543 / L948) (Mycobacterium abscessus)).